We begin with the raw amino-acid sequence, 692 residues long: Elongation factor G (692 aa).

A tr-type G domain is found at 8 to 282 (ENTRNIGIMA…AVIDYLPSPL (275 aa)). GTP-binding positions include 17–24 (AHIDAGKT), 81–85 (DTPGH), and 135–138 (NKMD).

Belongs to the TRAFAC class translation factor GTPase superfamily. Classic translation factor GTPase family. EF-G/EF-2 subfamily.

The protein localises to the cytoplasm. In terms of biological role, catalyzes the GTP-dependent ribosomal translocation step during translation elongation. During this step, the ribosome changes from the pre-translocational (PRE) to the post-translocational (POST) state as the newly formed A-site-bound peptidyl-tRNA and P-site-bound deacylated tRNA move to the P and E sites, respectively. Catalyzes the coordinated movement of the two tRNA molecules, the mRNA and conformational changes in the ribosome. This chain is Elongation factor G, found in Bacillus thuringiensis subsp. konkukian (strain 97-27).